Consider the following 202-residue polypeptide: Large ribosomal subunit protein bL25 (202 aa).

The segment at 1 to 21 is disordered; sequence MSKESYELKAEARERVGKGSS.

The protein belongs to the bacterial ribosomal protein bL25 family. CTC subfamily. In terms of assembly, part of the 50S ribosomal subunit; part of the 5S rRNA/L5/L18/L25 subcomplex. Contacts the 5S rRNA. Binds to the 5S rRNA independently of L5 and L18.

In terms of biological role, this is one of the proteins that binds to the 5S RNA in the ribosome where it forms part of the central protuberance. The protein is Large ribosomal subunit protein bL25 of Agrobacterium fabrum (strain C58 / ATCC 33970) (Agrobacterium tumefaciens (strain C58)).